A 451-amino-acid chain; its full sequence is 2-succinylbenzoate--CoA ligase (451 aa).

It belongs to the ATP-dependent AMP-binding enzyme family. MenE subfamily.

It carries out the reaction 2-succinylbenzoate + ATP + CoA = 2-succinylbenzoyl-CoA + AMP + diphosphate. The protein operates within quinol/quinone metabolism; 1,4-dihydroxy-2-naphthoate biosynthesis; 1,4-dihydroxy-2-naphthoate from chorismate: step 5/7. It participates in quinol/quinone metabolism; menaquinone biosynthesis. Functionally, converts 2-succinylbenzoate (OSB) to 2-succinylbenzoyl-CoA (OSB-CoA). In Escherichia coli (strain K12), this protein is 2-succinylbenzoate--CoA ligase.